The following is a 64-amino-acid chain: Large ribosomal subunit protein bL35 (64 aa).

Belongs to the bacterial ribosomal protein bL35 family.

In Shewanella loihica (strain ATCC BAA-1088 / PV-4), this protein is Large ribosomal subunit protein bL35.